A 521-amino-acid chain; its full sequence is Bifunctional purine biosynthesis protein PurH (521 aa).

Positions 1–145 constitute an MGS-like domain; that stretch reads MIKQALISVS…KNHRDVTVVV (145 aa).

This sequence belongs to the PurH family.

It carries out the reaction (6R)-10-formyltetrahydrofolate + 5-amino-1-(5-phospho-beta-D-ribosyl)imidazole-4-carboxamide = 5-formamido-1-(5-phospho-D-ribosyl)imidazole-4-carboxamide + (6S)-5,6,7,8-tetrahydrofolate. The catalysed reaction is IMP + H2O = 5-formamido-1-(5-phospho-D-ribosyl)imidazole-4-carboxamide. It participates in purine metabolism; IMP biosynthesis via de novo pathway; 5-formamido-1-(5-phospho-D-ribosyl)imidazole-4-carboxamide from 5-amino-1-(5-phospho-D-ribosyl)imidazole-4-carboxamide (10-formyl THF route): step 1/1. The protein operates within purine metabolism; IMP biosynthesis via de novo pathway; IMP from 5-formamido-1-(5-phospho-D-ribosyl)imidazole-4-carboxamide: step 1/1. The chain is Bifunctional purine biosynthesis protein PurH from Burkholderia ambifaria (strain ATCC BAA-244 / DSM 16087 / CCUG 44356 / LMG 19182 / AMMD) (Burkholderia cepacia (strain AMMD)).